The following is a 315-amino-acid chain: Olfactory receptor 4A5 (315 aa).

At 1-23 (MRQNNNITEFVLLGFSQDPGVQK) the chain is on the extracellular side. An N-linked (GlcNAc...) asparagine glycan is attached at Asn6. The helical transmembrane segment at 24-47 (ALFVMFLLTYLVTVVGNLLIVVDI) threads the bilayer. Residues 48–55 (IASPSLGS) are Cytoplasmic-facing. A helical membrane pass occupies residues 56-77 (PMYFFLACLSFIDAAYSTTISP). Residues 78–98 (KLIVGLFCDKKTISFQGCMGQ) are Extracellular-facing. An intrachain disulfide couples Cys95 to Cys186. A helical transmembrane segment spans residues 99 to 118 (LFIDHFFGGAEVFLLVVMAC). Topologically, residues 119-137 (DRYVAICKPLHYLTIMNRQ) are cytoplasmic. Residues 138–156 (VCFLLLVVAMIGGFVHSAF) traverse the membrane as a helical segment. Topologically, residues 157–192 (QIVVYSLPFCGPNVIVHFSCDMHPLLELACTDTYFI) are extracellular. The chain crosses the membrane as a helical span at residues 193-216 (GLTVVVNSGAICMVIFNLLLISYG). Residues 217-232 (VILSSLKTYSQEKRGK) are Cytoplasmic-facing. The helical transmembrane segment at 233 to 255 (ALSTCSSGSTVVVLFFVPCIFIY) threads the bilayer. At 256 to 266 (VRPVSNFPTDK) the chain is on the extracellular side. Residues 267–286 (FMTVFYTIITHMLSPLIYTL) traverse the membrane as a helical segment. At 287–315 (RNSEMRNAIEKLLGKKLTIFIIGGVSVLM) the chain is on the cytoplasmic side.

It belongs to the G-protein coupled receptor 1 family.

It localises to the cell membrane. In terms of biological role, odorant receptor. The sequence is that of Olfactory receptor 4A5 (OR4A5) from Homo sapiens (Human).